Reading from the N-terminus, the 122-residue chain is Large ribosomal subunit protein bL12 (122 aa).

It belongs to the bacterial ribosomal protein bL12 family. As to quaternary structure, homodimer. Part of the ribosomal stalk of the 50S ribosomal subunit. Forms a multimeric L10(L12)X complex, where L10 forms an elongated spine to which 2 to 4 L12 dimers bind in a sequential fashion. Binds GTP-bound translation factors.

Its function is as follows. Forms part of the ribosomal stalk which helps the ribosome interact with GTP-bound translation factors. Is thus essential for accurate translation. The polypeptide is Large ribosomal subunit protein bL12 (Xanthomonas oryzae pv. oryzae (strain MAFF 311018)).